The sequence spans 325 residues: Gamma-hemolysin component B (325 aa).

Positions 1-25 (MNMNKLVKSSVATSMALLLLSNTAN) are cleaved as a signal peptide.

It belongs to the aerolysin family. Toxicity requires sequential binding and synergistic association of a class S and a class F component which form heterooligomeric complexes. HlgB (class F) associates with either hlgA thus forming an AB toxin or with hlgC thus forming a CB toxin. Interacts with host AMFR.

Functionally, toxin that seems to act by forming pores in the membrane of the cell. Has a hemolytic and a leucotoxic activity. Promotes host AMFR-mediated inflammation by mediating 'Lys-27'-linked ubiquitination of TAB3, TAK1-TAB3 complex formation and phosphorylation of TAK1/MAP3K7. In turn, activates host NF-kappa-B signaling pathway. This Staphylococcus aureus (strain MRSA252) protein is Gamma-hemolysin component B (hlgB).